An 81-amino-acid polypeptide reads, in one-letter code: Large ribosomal subunit protein bL31B (81 aa).

This sequence belongs to the bacterial ribosomal protein bL31 family. Type B subfamily. In terms of assembly, part of the 50S ribosomal subunit.

The polypeptide is Large ribosomal subunit protein bL31B (Borrelia garinii subsp. bavariensis (strain ATCC BAA-2496 / DSM 23469 / PBi) (Borreliella bavariensis)).